The sequence spans 371 residues: D-alanine--D-alanine ligase (371 aa).

An ATP-grasp domain is found at 154 to 361 (KKLLVAEGLP…YPTLLAAMVD (208 aa)). 182–237 (RERLGLPVFVKPARGGSSIGVSRVSDWAELPAAIEAARRHDPKVIVEAGIAGRELE) is an ATP binding site. Positions 316, 328, and 330 each coordinate Mg(2+).

It belongs to the D-alanine--D-alanine ligase family. Mg(2+) is required as a cofactor. Mn(2+) serves as cofactor.

The protein resides in the cytoplasm. It catalyses the reaction 2 D-alanine + ATP = D-alanyl-D-alanine + ADP + phosphate + H(+). It participates in cell wall biogenesis; peptidoglycan biosynthesis. Functionally, cell wall formation. In Mycobacterium sp. (strain KMS), this protein is D-alanine--D-alanine ligase.